Reading from the N-terminus, the 621-residue chain is F-box/LRR-repeat protein 4 (621 aa).

Residue arginine 28 is modified to Asymmetric dimethylarginine. The F-box domain maps to 277-332 (NGYFDKLPYELIQLILNHLTLPDLCRLAQTCKLLNQHCCDPLQYIHLNLQPYWAKL). LRR repeat units follow at residues 376–397 (ELVR…EIIS), 402–421 (NLQD…AFSH), 427–448 (GLKR…SILN), 452–474 (DLQH…ASMI), 480–501 (KLRT…AELA), 504–524 (CPLL…STGC), 532–558 (LPNL…ASNC), 559–583 (TRLR…LLES), and 584–609 (CKDL…LSAS).

As to quaternary structure, part of a SCF (SKP1-CUL1-F-box) protein ligase complex. Interacts with FAF2 and VCP. Interacts with PPTC7; this interaction promotes destruction of BNIP3 and NIX and mitophagy suppression.

It is found in the cytoplasm. The protein localises to the nucleus. Its subcellular location is the mitochondrion outer membrane. Substrate-recognition component of the mitochondria-localized SCF-FBXL4 ubiquitin E3 ligase complex that plays a role in the restriction of mitophagy by controlling the degradation of BNIP3 and NIX mitophagy receptors. Also rescues mitochondrial injury through reverting hyperactivation of DRP1-mediated mitochondrial fission. The chain is F-box/LRR-repeat protein 4 (FBXL4) from Bos taurus (Bovine).